Consider the following 693-residue polypeptide: Elongation factor G (693 aa).

Residues 8–283 (NKVRNFGIAA…AVCDYLPSPL (276 aa)) form the tr-type G domain. GTP is bound by residues 17 to 24 (AHIDAGKT), 81 to 85 (DTPGH), and 135 to 138 (NKMD).

The protein belongs to the TRAFAC class translation factor GTPase superfamily. Classic translation factor GTPase family. EF-G/EF-2 subfamily.

The protein resides in the cytoplasm. Its function is as follows. Catalyzes the GTP-dependent ribosomal translocation step during translation elongation. During this step, the ribosome changes from the pre-translocational (PRE) to the post-translocational (POST) state as the newly formed A-site-bound peptidyl-tRNA and P-site-bound deacylated tRNA move to the P and E sites, respectively. Catalyzes the coordinated movement of the two tRNA molecules, the mRNA and conformational changes in the ribosome. In Endomicrobium trichonymphae, this protein is Elongation factor G.